The sequence spans 97 residues: MEKVTSIFFVLLLISSCLILRSQGQFRCKSVAECDSRGCRVGTHVICNEHHICTCAHGSPIGGQCDGVEDCDLSGCPPNSHVICDRIGGNFCTCVPN.

The first 24 residues, 1-24 (MEKVTSIFFVLLLISSCLILRSQG), serve as a signal peptide directing secretion. Disulfide bonds link C28-C47, C34-C53, C39-C55, C65-C84, C71-C92, and C76-C94.

Belongs to the DEFL family.

It is found in the secreted. This chain is Defensin-like protein 301, found in Arabidopsis thaliana (Mouse-ear cress).